A 388-amino-acid polypeptide reads, in one-letter code: Ferrochelatase (388 aa).

2 residues coordinate Fe cation: H196 and E277.

It belongs to the ferrochelatase family.

The protein resides in the cytoplasm. It catalyses the reaction heme b + 2 H(+) = protoporphyrin IX + Fe(2+). It functions in the pathway porphyrin-containing compound metabolism; protoheme biosynthesis; protoheme from protoporphyrin-IX: step 1/1. Catalyzes the ferrous insertion into protoporphyrin IX. The chain is Ferrochelatase from Trichormus variabilis (strain ATCC 29413 / PCC 7937) (Anabaena variabilis).